A 109-amino-acid chain; its full sequence is uncharacterized protein (109 aa).

This is an uncharacterized protein from Bacillus subtilis (strain 168).